The following is a 208-amino-acid chain: Imidazole glycerol phosphate synthase subunit HisH (208 aa).

In terms of domain architecture, Glutamine amidotransferase type-1 spans 2-208 (NVTIVDYNSG…LKIIENFLNL (207 aa)). Catalysis depends on Cys85, which acts as the Nucleophile. Catalysis depends on residues His190 and Glu192.

In terms of assembly, heterodimer of HisH and HisF.

Its subcellular location is the cytoplasm. It carries out the reaction 5-[(5-phospho-1-deoxy-D-ribulos-1-ylimino)methylamino]-1-(5-phospho-beta-D-ribosyl)imidazole-4-carboxamide + L-glutamine = D-erythro-1-(imidazol-4-yl)glycerol 3-phosphate + 5-amino-1-(5-phospho-beta-D-ribosyl)imidazole-4-carboxamide + L-glutamate + H(+). The enzyme catalyses L-glutamine + H2O = L-glutamate + NH4(+). The protein operates within amino-acid biosynthesis; L-histidine biosynthesis; L-histidine from 5-phospho-alpha-D-ribose 1-diphosphate: step 5/9. Its function is as follows. IGPS catalyzes the conversion of PRFAR and glutamine to IGP, AICAR and glutamate. The HisH subunit catalyzes the hydrolysis of glutamine to glutamate and ammonia as part of the synthesis of IGP and AICAR. The resulting ammonia molecule is channeled to the active site of HisF. The protein is Imidazole glycerol phosphate synthase subunit HisH of Pelagibacter ubique (strain HTCC1062).